The following is a 133-amino-acid chain: Large ribosomal subunit protein uL15 (133 aa).

Positions 1 to 58 are disordered; that stretch reads MALQNLTPAPGSTHATKRLGRGQGSGNGKTAGKGNKGQRARKGYNEKRGFEGGQQPLQ. A compositionally biased stretch (gly residues) spans 21–35; it reads RGQGSGNGKTAGKGN.

The protein belongs to the universal ribosomal protein uL15 family. In terms of assembly, part of the 50S ribosomal subunit.

Its function is as follows. Binds to the 23S rRNA. This Campylobacter curvus (strain 525.92) protein is Large ribosomal subunit protein uL15.